The sequence spans 417 residues: D-inositol 3-phosphate glycosyltransferase (417 aa).

His-15 is a 1D-myo-inositol 3-phosphate binding site. Residues 21 to 22 (QP) and Gly-29 contribute to the UDP-N-acetyl-alpha-D-glucosamine site. Residues 26 to 31 (DAGGMN), Lys-84, Tyr-117, Thr-141, and Arg-161 contribute to the 1D-myo-inositol 3-phosphate site. Residues Arg-241, Lys-246, and Val-299 each contribute to the UDP-N-acetyl-alpha-D-glucosamine site. Mg(2+)-binding residues include Tyr-308, Arg-309, and Ala-311. Glu-321 and Glu-329 together coordinate UDP-N-acetyl-alpha-D-glucosamine. Residue Thr-335 coordinates Mg(2+).

Belongs to the glycosyltransferase group 1 family. MshA subfamily. Homodimer.

The catalysed reaction is 1D-myo-inositol 3-phosphate + UDP-N-acetyl-alpha-D-glucosamine = 1D-myo-inositol 2-acetamido-2-deoxy-alpha-D-glucopyranoside 3-phosphate + UDP + H(+). Its function is as follows. Catalyzes the transfer of a N-acetyl-glucosamine moiety to 1D-myo-inositol 3-phosphate to produce 1D-myo-inositol 2-acetamido-2-deoxy-glucopyranoside 3-phosphate in the mycothiol biosynthesis pathway. This chain is D-inositol 3-phosphate glycosyltransferase, found in Xylanimonas cellulosilytica (strain DSM 15894 / JCM 12276 / CECT 5975 / KCTC 9989 / LMG 20990 / NBRC 107835 / XIL07).